The sequence spans 625 residues: MNFQENYDVIVIGGGHAGVEASLAAARMGSKTLLMTINLNMVAFMPCNPSIGGSAKGIVVREIDALGGEMGRNIDKTYIQMKMLNTGKGPAVRALRAQADKDEYAASMKNTVSDQENLTLRQGMVEELILDDEKQKVIGVRTSTGTQYGAKAVIITTGTALRGEIIIGELKYSSGPNNSLSSIGLADNLHEIGFEIGRFKTGTPPRVLASSIDYDKTEIQPGDEAPNHFSFMSSDEDYLKDQIPCWLTYTTENSHTILRDNLHRAPLFSGIVKGVGPRYCPSIEDKITRFADKPRHQLFLEPEGRNTEEVYIGGLSTSMPEDVQFDLVKSIPGLENAKMMRPGYAIEYDVVMPHQLRPTLETKLISGLFTAGQTNGTSGYEEAAGQGLVAGINAALKIQGKPEFILKRSEAYIGVMIDDLVTKGTLEPYRLLTSRAEYRLILRHDNADRRLTEIGRQVGLVSDAQWEHYQAKMAQFDREMKRLNSEKLKPLPDTQEKLGKLGFGPIKDALTGAEFLKRPEVHYDEVIDFIGQAPEVIDRTVIELIETEITYEGYIKKAMDQVDKMHRLEAKRIPKNMDWDKLDSIATEARQKFKKINPETLGQASRISGVNPADISILMVYLEGK.

FAD contacts are provided by residues 13 to 18 (GGGHAG), V125, and S182. 276–290 (GPRYCPSIEDKITRF) lines the NAD(+) pocket. Q373 is a binding site for FAD.

Belongs to the MnmG family. In terms of assembly, homodimer. Heterotetramer of two MnmE and two MnmG subunits. FAD is required as a cofactor.

Its subcellular location is the cytoplasm. Its function is as follows. NAD-binding protein involved in the addition of a carboxymethylaminomethyl (cmnm) group at the wobble position (U34) of certain tRNAs, forming tRNA-cmnm(5)s(2)U34. The sequence is that of tRNA uridine 5-carboxymethylaminomethyl modification enzyme MnmG from Lactococcus lactis subsp. cremoris (strain SK11).